A 205-amino-acid chain; its full sequence is Dephospho-CoA kinase (205 aa).

A DPCK domain is found at 3–204; the sequence is KVGLTGGIGA…HRAHQPGESQ (202 aa). 11-16 serves as a coordination point for ATP; the sequence is GAGKSE.

It belongs to the CoaE family.

The protein localises to the cytoplasm. The catalysed reaction is 3'-dephospho-CoA + ATP = ADP + CoA + H(+). The protein operates within cofactor biosynthesis; coenzyme A biosynthesis; CoA from (R)-pantothenate: step 5/5. Functionally, catalyzes the phosphorylation of the 3'-hydroxyl group of dephosphocoenzyme A to form coenzyme A. The sequence is that of Dephospho-CoA kinase from Streptomyces avermitilis (strain ATCC 31267 / DSM 46492 / JCM 5070 / NBRC 14893 / NCIMB 12804 / NRRL 8165 / MA-4680).